Reading from the N-terminus, the 145-residue chain is Basic phospholipase A2 KPA2 (145 aa).

Residues 1-19 (MYPAHLLVLVAVCVSLLGA) form the signal peptide. The propeptide occupies 20–27 (ANIPPQPL). Intrachain disulfides connect Cys-38–Cys-97, Cys-52–Cys-144, Cys-54–Cys-70, Cys-69–Cys-125, Cys-76–Cys-118, Cys-86–Cys-111, and Cys-104–Cys-116. The Ca(2+) site is built by Tyr-53, Gly-55, and Gly-57. The active site involves His-73. Residue Asp-74 participates in Ca(2+) binding. The active site involves Asp-119.

Belongs to the phospholipase A2 family. Group I subfamily. D49 sub-subfamily. Monomer. Ca(2+) is required as a cofactor. As to expression, expressed by the venom gland.

It localises to the secreted. The enzyme catalyses a 1,2-diacyl-sn-glycero-3-phosphocholine + H2O = a 1-acyl-sn-glycero-3-phosphocholine + a fatty acid + H(+). Its function is as follows. Snake venom phospholipase A2 (PLA2) that shows anticoagulant and neurotoxic activities. PLA2 catalyzes the calcium-dependent hydrolysis of the 2-acyl groups in 3-sn-phosphoglycerides. The sequence is that of Basic phospholipase A2 KPA2 from Bungarus caeruleus (Indian krait).